We begin with the raw amino-acid sequence, 876 residues long: Translation initiation factor IF-2 (876 aa).

The region spanning 378–547 (TRPPIITIMG…LTQSEMLELK (170 aa)) is the tr-type G domain. The G1 stretch occupies residues 387–394 (GHVDHGKT). GTP is bound at residue 387 to 394 (GHVDHGKT). Residues 412-416 (RITQH) form a G2 region. The G3 stretch occupies residues 433–436 (DTPG). GTP-binding positions include 433-437 (DTPGH) and 487-490 (NKID). A G4 region spans residues 487 to 490 (NKID). A G5 region spans residues 523-525 (SAK).

The protein belongs to the TRAFAC class translation factor GTPase superfamily. Classic translation factor GTPase family. IF-2 subfamily.

The protein localises to the cytoplasm. In terms of biological role, one of the essential components for the initiation of protein synthesis. Protects formylmethionyl-tRNA from spontaneous hydrolysis and promotes its binding to the 30S ribosomal subunits. Also involved in the hydrolysis of GTP during the formation of the 70S ribosomal complex. The sequence is that of Translation initiation factor IF-2 from Buchnera aphidicola subsp. Baizongia pistaciae (strain Bp).